We begin with the raw amino-acid sequence, 1035 residues long: MGSKRSVPSRHRSLTTYEVMFAVLFVILVALCAGLIAVSWLSIQGSVKDAAFGKSHEARGTLKIISGATYNPHLQDKLSVDFKVLAFDIQQMIDDIFQSSNLKNEYKNSRVLQFENGSIIVIFDLLFDQWVSDKNVKEELIQGIEANKSSQLVTFHIDLNSIDITASLENFSTISPATTSEKLTTSIPLATPGNVSIECPPDSRLCADALKCIAIDLFCDGELNCPDGSDEDNKTCATACDGRFLLTGSSGSFEALHYPKPSNNTSAVCRWIIRVNQGLSIQLNFDYFNTYYADVLNIYEGMGSSKILRASLWSNNPGIIRIFSNQVTATFLIQSDESDYIGFKVTYTAFNSKELNNYEKINCNFEDGFCFWIQDLNDDNEWERTQGSTFPPSTGPTFDHTFGNESGFYISTPTGPGGRRERVGLLTLPLDPTPEQACLSFWYYMYGENVYKLSINISSDQNMEKTIFQKEGNYGQNWNYGQVTLNETVEFKVSFYGFKNQILSDIALDDISLTYGICNVSVYPEPTLVPTPPPELPTDCGGPHDLWEPNTTFTSINFPNSYPNQAFCIWNLNAQKGKNIQLHFQEFDLENIADVVEIRDGEGDDSLFLAVYTGPGPVNDVFSTTNRMTVLFITDNMLAKQGFKANFTTGYGLGIPEPCKEDNFQCKDGECIPLVNLCDGFPHCKDGSDEAHCVRLFNGTTDSSGLVQFRIQSIWHVACAENWTTQISDDVCQLLGLGTGNSSVPTFSTGGGPYVNLNTAPNGSLILTPSQQCLEDSLILLQCNYKSCGKKLVTQEVSPKIVGGSDSREGAWPWVVALYFDDQQVCGASLVSRDWLVSAAHCVYGRNMEPSKWKAVLGLHMASNLTSPQIETRLIDQIVINPHYNKRRKNNDIAMMHLEMKVNYTDYIQPICLPEENQVFPPGRICSIAGWGALIYQGSTADVLQEADVPLLSNEKCQQQMPEYNITENMVCAGYEAGGVDSCQGDSGGPLMCQENNRWLLAGVTSFGYQCALPNRPGVYARVPRFTEWIQSFLH.

G2 carries N-myristoyl glycine lipidation. The Cytoplasmic portion of the chain corresponds to 2–18; it reads GSKRSVPSRHRSLTTYE. Residues 19 to 47 form a helical; Signal-anchor for type II membrane protein membrane-spanning segment; it reads VMFAVLFVILVALCAGLIAVSWLSIQGSV. Residues 48 to 1035 are Extracellular-facing; that stretch reads KDAAFGKSHE…FTEWIQSFLH (988 aa). Residues 54–169 enclose the SEA domain; the sequence is KSHEARGTLK…NSIDITASLE (116 aa). N-linked (GlcNAc...) asparagine glycosylation is found at N116, N147, N170, and N194. An LDL-receptor class A 1 domain is found at 197-238; that stretch reads IECPPDSRLCADALKCIAIDLFCDGELNCPDGSDEDNKTCAT. Cystine bridges form between C199-C212, C206-C225, C219-C236, and C240-C269. N-linked (GlcNAc...) asparagine glycans are attached at residues N233, N263, N264, N404, N456, N486, N519, N550, and N646. Residues 240–350 form the CUB 1 domain; that stretch reads CDGRFLLTGS…IGFKVTYTAF (111 aa). Residues 358–520 enclose the MAM domain; sequence YEKINCNFED…ISLTYGICNV (163 aa). A disulfide bridge connects residues C540 and C568. The region spanning 540–650 is the CUB 2 domain; that stretch reads CGGPHDLWEP…QGFKANFTTG (111 aa). An LDL-receptor class A 2 domain is found at 657–695; sequence EPCKEDNFQCKDGECIPLVNLCDGFPHCKDGSDEAHCVR. 3 disulfide bridges follow: C659–C671, C666–C684, and C678–C693. The SRCR domain occupies 694-787; the sequence is VRLFNGTTDS…LILLQCNYKS (94 aa). N-linked (GlcNAc...) asparagine glycans are attached at residues N698, N722, N741, and N762. Disulfide bonds link C773-C783, C788-C912, C826-C842, C926-C993, C957-C972, and C983-C1011. The Peptidase S1 domain maps to 801 to 1035; sequence IVGGSDSREG…FTEWIQSFLH (235 aa). The active-site Charge relay system is the H841. Residue N864 is glycosylated (N-linked (GlcNAc...) asparagine). The active-site Charge relay system is the D892. Residues N903 and N965 are each glycosylated (N-linked (GlcNAc...) asparagine). The active-site Charge relay system is S987.

It belongs to the peptidase S1 family. Heterodimer of a catalytic (light) chain and a multidomain (heavy) chain linked by a disulfide bond. Post-translationally, the chains are derived from a single precursor that is cleaved by a trypsin-like protease. In terms of tissue distribution, intestinal brush border.

It localises to the membrane. It catalyses the reaction Activation of trypsinogen by selective cleavage of 6-Lys-|-Ile-7 bond.. Functionally, responsible for initiating activation of pancreatic proteolytic proenzymes (trypsin, chymotrypsin and carboxypeptidase A). It catalyzes the conversion of trypsinogen to trypsin which in turn activates other proenzymes including chymotrypsinogen, procarboxypeptidases, and proelastases. The chain is Enteropeptidase (TMPRSS15) from Bos taurus (Bovine).